Reading from the N-terminus, the 156-residue chain is ATP synthase subunit b (156 aa).

The chain crosses the membrane as a helical span at residues 7 to 27; sequence IFFQMLVFFVLGWFTMKFVWP.

It belongs to the ATPase B chain family. In terms of assembly, F-type ATPases have 2 components, F(1) - the catalytic core - and F(0) - the membrane proton channel. F(1) has five subunits: alpha(3), beta(3), gamma(1), delta(1), epsilon(1). F(0) has three main subunits: a(1), b(2) and c(10-14). The alpha and beta chains form an alternating ring which encloses part of the gamma chain. F(1) is attached to F(0) by a central stalk formed by the gamma and epsilon chains, while a peripheral stalk is formed by the delta and b chains.

The protein resides in the cell inner membrane. In terms of biological role, f(1)F(0) ATP synthase produces ATP from ADP in the presence of a proton or sodium gradient. F-type ATPases consist of two structural domains, F(1) containing the extramembraneous catalytic core and F(0) containing the membrane proton channel, linked together by a central stalk and a peripheral stalk. During catalysis, ATP synthesis in the catalytic domain of F(1) is coupled via a rotary mechanism of the central stalk subunits to proton translocation. Component of the F(0) channel, it forms part of the peripheral stalk, linking F(1) to F(0). The sequence is that of ATP synthase subunit b from Bordetella pertussis (strain Tohama I / ATCC BAA-589 / NCTC 13251).